The sequence spans 132 residues: Small ribosomal subunit protein uS8 (132 aa).

Belongs to the universal ribosomal protein uS8 family. In terms of assembly, part of the 30S ribosomal subunit. Contacts proteins S5 and S12.

One of the primary rRNA binding proteins, it binds directly to 16S rRNA central domain where it helps coordinate assembly of the platform of the 30S subunit. The sequence is that of Small ribosomal subunit protein uS8 from Geobacillus thermodenitrificans (strain NG80-2).